Here is a 278-residue protein sequence, read N- to C-terminus: Ribonuclease HII (278 aa).

Residues 71-259 (WPVAGCDEAG…VAAAWDKHAP (189 aa)) enclose the RNase H type-2 domain. 3 residues coordinate a divalent metal cation: Asp-77, Glu-78, and Asp-168.

Belongs to the RNase HII family. Mn(2+) serves as cofactor. Mg(2+) is required as a cofactor.

It localises to the cytoplasm. The catalysed reaction is Endonucleolytic cleavage to 5'-phosphomonoester.. Endonuclease that specifically degrades the RNA of RNA-DNA hybrids. This is Ribonuclease HII from Rhodopseudomonas palustris (strain BisA53).